We begin with the raw amino-acid sequence, 1157 residues long: ATP-dependent helicase/deoxyribonuclease subunit B (1157 aa).

The UvrD-like helicase ATP-binding domain maps to 1-277 (MTLQIIAGKS…KLFLENKRAK (277 aa)). An ATP-binding site is contributed by 8–15 (GKSGTGKT). The 307-residue stretch at 272–578 (ENKRAKSDSL…EFSLLPPSLD (307 aa)) folds into the UvrD-like helicase C-terminal domain. 4 residues coordinate [4Fe-4S] cluster: cysteine 794, cysteine 1115, cysteine 1118, and cysteine 1124.

Belongs to the helicase family. AddB/RexB type 1 subfamily. In terms of assembly, heterodimer of AddA and AddB. Requires Mg(2+) as cofactor. [4Fe-4S] cluster is required as a cofactor.

The heterodimer acts as both an ATP-dependent DNA helicase and an ATP-dependent, dual-direction single-stranded exonuclease. Recognizes the chi site generating a DNA molecule suitable for the initiation of homologous recombination. The AddB subunit has 5' -&gt; 3' nuclease activity but not helicase activity. The polypeptide is ATP-dependent helicase/deoxyribonuclease subunit B (Listeria welshimeri serovar 6b (strain ATCC 35897 / DSM 20650 / CCUG 15529 / CIP 8149 / NCTC 11857 / SLCC 5334 / V8)).